Reading from the N-terminus, the 370-residue chain is Heme A synthase (370 aa).

8 consecutive transmembrane segments (helical) span residues 15–35, 104–124, 129–149, 161–181, 200–220, 261–280, 293–313, and 317–337; these read VRIWLTLVAALIAVMVLVGGA, VIGIVYLLPFLWFLWRGAIGP, ALWIIFALGALQGAVGWWMVA, VRLATHLSLALIIYAAIVWTL, ALALLGLTFVQLYAGALVAGL, QFDHRMLAYALWTLAALHMI, GAVLLFLALTVQAALGIFTVL, and PIDLALAHQAMALVVLTLAVL. His-264 is a binding site for heme. Residue His-324 participates in heme binding.

It belongs to the COX15/CtaA family. Type 2 subfamily. In terms of assembly, interacts with CtaB. Heme b serves as cofactor.

It localises to the cell membrane. It carries out the reaction Fe(II)-heme o + 2 A + H2O = Fe(II)-heme a + 2 AH2. It participates in porphyrin-containing compound metabolism; heme A biosynthesis; heme A from heme O: step 1/1. Functionally, catalyzes the conversion of heme O to heme A by two successive hydroxylations of the methyl group at C8. The first hydroxylation forms heme I, the second hydroxylation results in an unstable dihydroxymethyl group, which spontaneously dehydrates, resulting in the formyl group of heme A. In Rhodopseudomonas palustris (strain TIE-1), this protein is Heme A synthase.